The following is a 227-amino-acid chain: Cytochrome c oxidase subunit 2 (227 aa).

At 1–14 the chain is on the mitochondrial intermembrane side; it reads MAYPLQLGFQDATS. A helical transmembrane segment spans residues 15–45; the sequence is PVMEELLHFHDHTLMIIFLISSLVLYIIMLM. Over 46 to 59 the chain is Mitochondrial matrix; sequence LTTKLIHTNMMNVQ. The helical transmembrane segment at 60 to 87 threads the bilayer; the sequence is EMEMIWTILPAIILILIALPSLHTLYMM. Over 88–227 the chain is Mitochondrial intermembrane; that stretch reads DEINNPLLTI…YFESWSASLA (140 aa). Cu cation contacts are provided by H161, C196, E198, C200, H204, and M207. Residue E198 coordinates Mg(2+). Residue Y218 is modified to Phosphotyrosine.

Belongs to the cytochrome c oxidase subunit 2 family. Component of the cytochrome c oxidase (complex IV, CIV), a multisubunit enzyme composed of 14 subunits. The complex is composed of a catalytic core of 3 subunits MT-CO1, MT-CO2 and MT-CO3, encoded in the mitochondrial DNA, and 11 supernumerary subunits COX4I, COX5A, COX5B, COX6A, COX6B, COX6C, COX7A, COX7B, COX7C, COX8 and NDUFA4, which are encoded in the nuclear genome. The complex exists as a monomer or a dimer and forms supercomplexes (SCs) in the inner mitochondrial membrane with NADH-ubiquinone oxidoreductase (complex I, CI) and ubiquinol-cytochrome c oxidoreductase (cytochrome b-c1 complex, complex III, CIII), resulting in different assemblies (supercomplex SCI(1)III(2)IV(1) and megacomplex MCI(2)III(2)IV(2)). Found in a complex with TMEM177, COA6, COX18, COX20, SCO1 and SCO2. Interacts with TMEM177 in a COX20-dependent manner. Interacts with COX20. Interacts with COX16. Cu cation is required as a cofactor.

Its subcellular location is the mitochondrion inner membrane. It catalyses the reaction 4 Fe(II)-[cytochrome c] + O2 + 8 H(+)(in) = 4 Fe(III)-[cytochrome c] + 2 H2O + 4 H(+)(out). Component of the cytochrome c oxidase, the last enzyme in the mitochondrial electron transport chain which drives oxidative phosphorylation. The respiratory chain contains 3 multisubunit complexes succinate dehydrogenase (complex II, CII), ubiquinol-cytochrome c oxidoreductase (cytochrome b-c1 complex, complex III, CIII) and cytochrome c oxidase (complex IV, CIV), that cooperate to transfer electrons derived from NADH and succinate to molecular oxygen, creating an electrochemical gradient over the inner membrane that drives transmembrane transport and the ATP synthase. Cytochrome c oxidase is the component of the respiratory chain that catalyzes the reduction of oxygen to water. Electrons originating from reduced cytochrome c in the intermembrane space (IMS) are transferred via the dinuclear copper A center (CU(A)) of subunit 2 and heme A of subunit 1 to the active site in subunit 1, a binuclear center (BNC) formed by heme A3 and copper B (CU(B)). The BNC reduces molecular oxygen to 2 water molecules using 4 electrons from cytochrome c in the IMS and 4 protons from the mitochondrial matrix. The sequence is that of Cytochrome c oxidase subunit 2 (MT-CO2) from Elephas maximus (Indian elephant).